The following is a 419-amino-acid chain: Serine hydroxymethyltransferase (419 aa).

(6S)-5,6,7,8-tetrahydrofolate is bound by residues leucine 121 and 125–127 (GHL). Position 229 is an N6-(pyridoxal phosphate)lysine (lysine 229). Position 354–356 (354–356 (SPF)) interacts with (6S)-5,6,7,8-tetrahydrofolate.

Belongs to the SHMT family. In terms of assembly, homodimer. It depends on pyridoxal 5'-phosphate as a cofactor.

The protein localises to the cytoplasm. The enzyme catalyses (6R)-5,10-methylene-5,6,7,8-tetrahydrofolate + glycine + H2O = (6S)-5,6,7,8-tetrahydrofolate + L-serine. It functions in the pathway one-carbon metabolism; tetrahydrofolate interconversion. Its pathway is amino-acid biosynthesis; glycine biosynthesis; glycine from L-serine: step 1/1. Its function is as follows. Catalyzes the reversible interconversion of serine and glycine with tetrahydrofolate (THF) serving as the one-carbon carrier. This reaction serves as the major source of one-carbon groups required for the biosynthesis of purines, thymidylate, methionine, and other important biomolecules. Also exhibits THF-independent aldolase activity toward beta-hydroxyamino acids, producing glycine and aldehydes, via a retro-aldol mechanism. The chain is Serine hydroxymethyltransferase from Coxiella burnetii (strain CbuG_Q212) (Coxiella burnetii (strain Q212)).